Consider the following 314-residue polypeptide: MPTELDKIFLILAIVEFIIGLLGNVFIGLVNCSEGIKNQKVFSADFILTCLAISTIGQLLVILFDSFLVGLASHLYTTYRLGKLVILLWHMTNHLTTWLATCLSIFYFFKIAHFPHSLFLWLRWRMNGMIVMLRTLSLFLLIFDSLVLKLFIDISLNIIDKSNLTLYFDESKTLYDKLSILKTLLSLTSFIPFSLSLTSLLFLFLSLVRHTRNLKLSSLGSRDSSTEAHRRAMKMVMSFLFLFIVHFFSLQVANWIFFMSWNNKYIKFVMLALNAFPSCHSFILILGNSKLRQTAVRLLSHLRNYTKTSNPLPL.

The Extracellular portion of the chain corresponds to 1–7 (MPTELDK). Residues 8-28 (IFLILAIVEFIIGLLGNVFIG) form a helical membrane-spanning segment. Residues 29 to 50 (LVNCSEGIKNQKVFSADFILTC) lie on the Cytoplasmic side of the membrane. A helical transmembrane segment spans residues 51–71 (LAISTIGQLLVILFDSFLVGL). Topologically, residues 72–101 (ASHLYTTYRLGKLVILLWHMTNHLTTWLAT) are extracellular. Residues 102 to 122 (CLSIFYFFKIAHFPHSLFLWL) traverse the membrane as a helical segment. Topologically, residues 123–127 (RWRMN) are cytoplasmic. Residues 128–148 (GMIVMLRTLSLFLLIFDSLVL) form a helical membrane-spanning segment. Topologically, residues 149-187 (KLFIDISLNIIDKSNLTLYFDESKTLYDKLSILKTLLSL) are extracellular. An N-linked (GlcNAc...) asparagine glycan is attached at N163. Residues 188–208 (TSFIPFSLSLTSLLFLFLSLV) form a helical membrane-spanning segment. The Cytoplasmic segment spans residues 209-238 (RHTRNLKLSSLGSRDSSTEAHRRAMKMVMS). Residues 239–259 (FLFLFIVHFFSLQVANWIFFM) traverse the membrane as a helical segment. Residues 260 to 265 (SWNNKY) are Extracellular-facing. A helical membrane pass occupies residues 266 to 286 (IKFVMLALNAFPSCHSFILIL). Residues 287–314 (GNSKLRQTAVRLLSHLRNYTKTSNPLPL) are Cytoplasmic-facing.

This sequence belongs to the G-protein coupled receptor T2R family.

It is found in the membrane. Functionally, receptor that may play a role in the perception of bitterness and is gustducin-linked. May play a role in sensing the chemical composition of the gastrointestinal content. The activity of this receptor may stimulate alpha gustducin, mediate PLC-beta-2 activation and lead to the gating of TRPM5. The protein is Taste receptor type 2 member 42 (TAS2R42) of Pongo pygmaeus (Bornean orangutan).